The sequence spans 385 residues: MASATVTKTNIGVYTNPKHDLWIADSSPTAEDINAGKGLKAGEVTIEVRSTGICGSDVHFWHAGCIGPMIVTGDHVLGHESAGQVLAVAPDVTHLKVGDRVAVEPNVICNACEPCLTGRYNGCVNVAFLSTPPVDGLLRRYVNHPAVWCHKIGDMSYEDGAMLEPLSVTLAAIERSGLRLGDPLLITGAGPIGLISLLSARAAGACPIVITDIDEGRLAFAKSLVPEVRTYKVEIGKSAEECADGIINALNDGQGSGPDALRPKLALECTGVESSVNSAIWSVKFGGKVFVIGVGKNEMTIPFMRLSTQEIDLQYQYRYCNTWPRAIRLIQNGVIDLSKLVTHRYSLENALQAFETASNPKTGAIKVQIMSSEEDVKAATAGQKY.

Zn(2+)-binding residues include Cys-54, His-79, Glu-80, Cys-109, Cys-112, Cys-115, Cys-123, and Glu-164. Residues Pro-191–Ile-192, Asp-212, Arg-217, Ile-292, and Gln-316–Arg-318 each bind NAD(+).

The protein belongs to the zinc-containing alcohol dehydrogenase family. As to quaternary structure, homotetramer. The cofactor is Zn(2+).

The catalysed reaction is L-arabinitol + NAD(+) = L-xylulose + NADH + H(+). The protein operates within carbohydrate degradation; L-arabinose degradation via L-arabinitol; D-xylulose 5-phosphate from L-arabinose (fungal route): step 2/5. Catalyzes the NAD-dependent oxidation of L-arabinitol to L-xylulose in the fungal L-arabinose catabolic pathway. L-arabinose catabolism is important for using plant material as a carbon source. NADP cannot act as a cosubstrate. In Penicillium rubens (strain ATCC 28089 / DSM 1075 / NRRL 1951 / Wisconsin 54-1255) (Penicillium chrysogenum), this protein is L-arabinitol 4-dehydrogenase (lad1).